The following is a 375-amino-acid chain: MSCPVIELAQQLIRRPSLSPDDAGCQALMIERLRAIGFTVEPMDFGDTQNFWAWRGHGETLAFAGHTDVVPAGDADRWINPPFEPTIRDGMLFGRGAADMKGSLAAMVVAAERFVAQYPNHRGRLAFLITSDEEASAKNGTVKVVETLMARNERLDYCLVGEPSSTEVVGDVVKNGRRGSLTCNLTIHGVQGHVAYPHLADNPVHRAAPMLAELVNIEWDKGNEFFPPTSMQIANVQSGTGSNNVIPGDMFVQFNFRFSTELTDEMIKSRVIALLEKYQLRYRLEWWLSGQPFLTGRGKLVDAVVNAIEHYNEIKPQLLTNGGTSDGRFIARMGAQVVELGPVNATIHKINECVNAADLQLLARMYQRVMEQLVA.

Zn(2+) is bound at residue histidine 66. Aspartate 68 is an active-site residue. Aspartate 99 provides a ligand contact to Zn(2+). Catalysis depends on glutamate 133, which acts as the Proton acceptor. Residues glutamate 134, glutamate 162, and histidine 348 each contribute to the Zn(2+) site.

It belongs to the peptidase M20A family. DapE subfamily. Homodimer. Zn(2+) serves as cofactor. It depends on Co(2+) as a cofactor.

The catalysed reaction is N-succinyl-(2S,6S)-2,6-diaminopimelate + H2O = (2S,6S)-2,6-diaminopimelate + succinate. Its pathway is amino-acid biosynthesis; L-lysine biosynthesis via DAP pathway; LL-2,6-diaminopimelate from (S)-tetrahydrodipicolinate (succinylase route): step 3/3. Catalyzes the hydrolysis of N-succinyl-L,L-diaminopimelic acid (SDAP), forming succinate and LL-2,6-diaminopimelate (DAP), an intermediate involved in the bacterial biosynthesis of lysine and meso-diaminopimelic acid, an essential component of bacterial cell walls. The polypeptide is Succinyl-diaminopimelate desuccinylase (Klebsiella pneumoniae subsp. pneumoniae (strain ATCC 700721 / MGH 78578)).